We begin with the raw amino-acid sequence, 1342 residues long: Zinc finger protein 335 (1342 aa).

Disordered regions lie at residues 1-102 (MEEN…VTGG) and 201-228 (TSTSTCLEAQGGPSSPVQLPPASGAEEP). The segment covering 34 to 49 (AVSADSSDAAAAPGQA) has biased composition (low complexity). The span at 201-217 (TSTSTCLEAQGGPSSPV) shows a compositional bias: polar residues. Residues 245 to 268 (FKCKMCQYRSSTKATLLRHMRERH) form a C2H2-type 1 zinc finger. The disordered stretch occupies residues 274-442 (AAAAAAGKKG…TLPRRRGRPS (169 aa)). Residues 297–327 (EEGPEEEDDDDIVDAGAIDDLEEDSDYNPAE) show a composition bias toward acidic residues. Basic residues predominate over residues 346 to 357 (RPRRRPGRPRKL). 8 consecutive C2H2-type zinc fingers follow at residues 465–487 (FLCRICGSRFLSHEDLRFHVNSH), 495–517 (FKCLQCSYRSRRWSSLKEHMFNH), 523–545 (YKCDECSYTSVYRKDVIRHAAVH), 562–584 (FPCPVCGRVYPMQKRLTQHMKTH), 590–612 (HMCDKCGKSFKKRYTFKMHLLTH), 621–643 (FKCEFCEFVCEDKKALLNHQLSH), 649–672 (FKCSFCPYRTFREDFLLSHVAVKH), and 678–701 (FACEYCHFSTRHKKNLRLHVRCRH). Disordered stretches follow at residues 732–763 (LKQQHSAAPGPPPSSPGPPEIPPEATTFQSSE) and 964–1013 (CGGL…SAAT). The span at 740-753 (PGPPPSSPGPPEIP) shows a compositional bias: pro residues. Phosphoserine occurs at positions 976, 992, and 1007. Positions 986-997 (SQSSASSPPATS) are enriched in low complexity. 4 consecutive C2H2-type zinc fingers follow at residues 1019-1041 (FSCKICAEAFPGRAEMESHKRAH), 1047-1069 (FKCPDCPFSARQWPEVRAHMAQH), 1075-1097 (HQCSQCSFASKNKKDLRRHMLTH), and 1103-1126 (FACHLCGQRFNRNGHLKFHIQRLH). K1022 participates in a covalent cross-link: Glycyl lysine isopeptide (Lys-Gly) (interchain with G-Cter in SUMO2). An involved in the interaction with CCAR2 region spans residues 1041-1342 (HAGPGAFKCP…EYDVITLADD (302 aa)). S1153 is modified (phosphoserine).

The protein belongs to the krueppel C2H2-type zinc-finger protein family. In terms of assembly, interacts with NCOA6; may enhance ligand-dependent transcriptional activation by nuclear hormone receptors. Interacts with CNOT6. Interacts with CNOT9; the interaction is direct. Component of a nuclear receptor-mediated transcription complex composed of at least ZNF335, CCAR2 and EMSY; the complex stimulates the transcription of nuclear receptor target genes such as SOX9 and HOXA1. Within the complex interacts with EMSY and interacts (via C-terminus) with CCAR2. Interacts with members of histone H3'Lys4'(H3K4) methyltransferase complexes ASH2L, CXXC1, KMT2A/MLL1, RBBP5, SETD1A and WDR5. Component of a histone methylation complex composed of at least ZNF335, RBBP5, ASH2L and WDR5; the complex may have histone H3-specific methyltransferase activity, however does not have specificity for 'Lys-4' of histone H3. Interacts with RBBP5 and WDR5. Interacts with ASHL2. Components of this complex may associate with components of the ZNF335-CCAR2-EMSY nuclear receptor-mediated transcription complex to form a complex at least composed of ZNF335, HCFC1, CCAR2, EMSY, MKI67, RBBP5, ASH2L and WDR5. Within this complex also interacts with HCFC1 and MKI67. As to expression, ubiquitously expressed.

It is found in the nucleus. Its function is as follows. Component or associated component of some histone methyltransferase complexes may regulate transcription through recruitment of those complexes on gene promoters. Enhances ligand-dependent transcriptional activation by nuclear hormone receptors. Plays an important role in neural progenitor cell proliferation and self-renewal through the regulation of specific genes involved brain development, including REST. Also controls the expression of genes involved in somatic development and regulates, for instance, lymphoblast proliferation. This chain is Zinc finger protein 335 (ZNF335), found in Homo sapiens (Human).